A 550-amino-acid chain; its full sequence is Hydroxylamine reductase (550 aa).

[2Fe-2S] cluster is bound by residues cysteine 3, cysteine 6, cysteine 18, and cysteine 25. Residues histidine 249, glutamate 273, cysteine 317, cysteine 405, cysteine 433, cysteine 458, glutamate 492, and lysine 494 each contribute to the hybrid [4Fe-2O-2S] cluster site. Cysteine 405 is modified (cysteine persulfide).

The protein belongs to the HCP family. [2Fe-2S] cluster is required as a cofactor. The cofactor is hybrid [4Fe-2O-2S] cluster.

Its subcellular location is the cytoplasm. The enzyme catalyses A + NH4(+) + H2O = hydroxylamine + AH2 + H(+). Functionally, catalyzes the reduction of hydroxylamine to form NH(3) and H(2)O. This is Hydroxylamine reductase from Salmonella typhi.